A 96-amino-acid chain; its full sequence is Cytoplasmic envelopment protein 3 (96 aa).

The N-myristoyl glycine; by host moiety is linked to residue Gly-2. The Di-leucine-like internalization motif motif lies at 18–19; that stretch reads LI. The tract at residues 37 to 43 is asp/Glu-rich (acidic); sequence DIESEEE. Ser-40 is modified (phosphoserine). The interval 57 to 96 is disordered; it reads RAPGRQRLRSSDPPSRHTHRRTPGGACPATQFPPPMSDSE. Residues 87–96 are compositionally biased toward pro residues; that stretch reads QFPPPMSDSE.

The protein belongs to the herpesviridae cytoplasmic envelopment protein 3 family. As to quaternary structure, interacts with cytoplasmic envelopment protein 2; this interaction is essential for the proper localization of each protein to the assembly complex and thus for the production of infectious virus. Interacts with gE (via C-terminus). Interacts with gD (via C-terminus). Interacts with UL56. Post-translationally, myristoylation and palmitoylation (probably on one or more of the nearby cysteines at the N-terminus) enable membrane-binding and Golgi apparatus-specific targeting and are essential for efficient packaging. In terms of processing, phosphorylated. Phosphorylation does not seem to be required for recycling to the host Golgi apparatus. Packaging is selective for underphosphorylated forms.

Its subcellular location is the virion tegument. The protein resides in the virion membrane. It localises to the host cell membrane. It is found in the host Golgi apparatus membrane. Functionally, plays an important role in the cytoplasmic envelopment of tegument proteins and capsids during the assembly and egress processes. Also participates in viral entry at the fusion step probably by regulating the core fusion machinery. The chain is Cytoplasmic envelopment protein 3 from Human herpesvirus 1 (strain KOS) (HHV-1).